A 118-amino-acid polypeptide reads, in one-letter code: MQAKAILRHTPTSPRKMRIVAGLIRGKQVDQAKAILLNSTKAASRQVIQTLKSAVANYAQLNPEDRAGDNELVVKTIFVDEGPTIKRMLPAPMGRAYRIRKRSNHLTIVVDKGNPVKK.

The protein belongs to the universal ribosomal protein uL22 family. In terms of assembly, part of the 50S ribosomal subunit.

Its function is as follows. This protein binds specifically to 23S rRNA; its binding is stimulated by other ribosomal proteins, e.g. L4, L17, and L20. It is important during the early stages of 50S assembly. It makes multiple contacts with different domains of the 23S rRNA in the assembled 50S subunit and ribosome. The globular domain of the protein is located near the polypeptide exit tunnel on the outside of the subunit, while an extended beta-hairpin is found that lines the wall of the exit tunnel in the center of the 70S ribosome. This is Large ribosomal subunit protein uL22 from Prosthecochloris aestuarii (strain DSM 271 / SK 413).